A 100-amino-acid chain; its full sequence is MIENALILGAYLFCIGFYGLITSRNMIRALMCLELIFNAVNINFVTFSNYFDTQERKGEIFSISVIAIAAAEAAIGLSIILIIYRNRKSTRIDQFNLLKW.

Helical transmembrane passes span 1 to 21 (MIEN…YGLI), 29 to 49 (ALMC…TFSN), and 63 to 83 (ISVI…ILII).

Belongs to the complex I subunit 4L family. As to quaternary structure, NDH is composed of at least 16 different subunits, 5 of which are encoded in the nucleus.

It is found in the plastid. Its subcellular location is the chloroplast thylakoid membrane. It catalyses the reaction a plastoquinone + NADH + (n+1) H(+)(in) = a plastoquinol + NAD(+) + n H(+)(out). It carries out the reaction a plastoquinone + NADPH + (n+1) H(+)(in) = a plastoquinol + NADP(+) + n H(+)(out). NDH shuttles electrons from NAD(P)H:plastoquinone, via FMN and iron-sulfur (Fe-S) centers, to quinones in the photosynthetic chain and possibly in a chloroplast respiratory chain. The immediate electron acceptor for the enzyme in this species is believed to be plastoquinone. Couples the redox reaction to proton translocation, and thus conserves the redox energy in a proton gradient. The polypeptide is NAD(P)H-quinone oxidoreductase subunit 4L, chloroplastic (Angiopteris evecta (Mule's foot fern)).